The chain runs to 767 residues: Integrin beta-8 (767 aa).

The first 21 residues, 1–21 (MCGSALAFLTAALLSLHNCQR), serve as a signal peptide directing secretion. The Extracellular segment spans residues 22-681 (GPALVLGAAW…SECLSGPSYL (660 aa)). Residues 46–95 (RCGSANVVSCARCLQLGPECGWCVQEDFVSGGSGSERCDTVSSLISKGCP) enclose the PSI domain. Intrachain disulfides connect Cys47–Cys65, Cys55–Cys469, Cys58–Cys83, Cys68–Cys94, Cys211–Cys218, Cys266–Cys307, Cys407–Cys419, Cys439–Cys467, Cys471–Cys490, Cys471–Cys493, Cys481–Cys493, Cys498–Cys527, Cys510–Cys525, Cys519–Cys530, Cys532–Cys545, Cys552–Cys566, Cys560–Cys571, Cys573–Cys582, Cys584–Cys608, Cys592–Cys606, Cys600–Cys611, Cys613–Cys623, Cys626–Cys629, Cys633–Cys660, and Cys639–Cys656. The VWFA domain maps to 146–384 (PVDLYYLVDV…NLVVEAYKKI (239 aa)). Mg(2+) contacts are provided by Asp154 and Ser156. Asp193 serves as a coordination point for Ca(2+). Residue Asn233 is glycosylated (N-linked (GlcNAc...) asparagine). Residues Asn249, Asp251, Pro253, and Glu254 each coordinate Ca(2+). Residue Glu254 participates in Mg(2+) binding. N-linked (GlcNAc...) asparagine glycosylation is present at Asn402. 3 N-linked (GlcNAc...) asparagine glycosylation sites follow: Asn421, Asn431, and Asn456. I-EGF domains lie at 471–494 (CENHRGLKGQCAEAAPDPKCPQCD), 498–546 (CHFD…QYCE), 547–583 (KDDFSCPYLHGDVCAGHGECEGGRCQCFSGWEGDRCQ), and 584–624 (CPSA…RLCE). Asn647 is a glycosylation site (N-linked (GlcNAc...) asparagine). The helical transmembrane segment at 682–702 (RIFFIIFIVTFLIGLLKVLII) threads the bilayer. Topologically, residues 703-767 (RQVILQWNNN…NAQEAFRCNF (65 aa)) are cytoplasmic.

Belongs to the integrin beta chain family. In terms of assembly, heterodimer of an alpha and a beta subunit. Beta-8 (ITGB8) associates with alpha-V (ITGAV) to form ITGAV:ITGB8. ITGAV:ITGB8 interacts with TGFB1.

It is found in the cell membrane. In terms of biological role, integrin alpha-V:beta-8 (ITGAV:ITGB8) is a receptor for fibronectin. It recognizes the sequence R-G-D in its ligands. Integrin alpha-V:beta-6 (ITGAV:ITGB6) mediates R-G-D-dependent release of transforming growth factor beta-1 (TGF-beta-1) from regulatory Latency-associated peptide (LAP), thereby playing a key role in TGF-beta-1 activation on the surface of activated regulatory T-cells (Tregs). Required during vasculogenesis. This chain is Integrin beta-8, found in Mus musculus (Mouse).